The sequence spans 146 residues: Large ribosomal subunit protein uL15 (146 aa).

Over residues methionine 1 to alanine 10 the composition is skewed to polar residues. Positions methionine 1–glutamine 54 are disordered. Positions arginine 21–alanine 31 are enriched in gly residues.

Belongs to the universal ribosomal protein uL15 family. As to quaternary structure, part of the 50S ribosomal subunit.

Its function is as follows. Binds to the 23S rRNA. This Halorhodospira halophila (strain DSM 244 / SL1) (Ectothiorhodospira halophila (strain DSM 244 / SL1)) protein is Large ribosomal subunit protein uL15.